The sequence spans 476 residues: Aspartyl/glutamyl-tRNA(Asn/Gln) amidotransferase subunit B (476 aa).

Belongs to the GatB/GatE family. GatB subfamily. As to quaternary structure, heterotrimer of A, B and C subunits.

It carries out the reaction L-glutamyl-tRNA(Gln) + L-glutamine + ATP + H2O = L-glutaminyl-tRNA(Gln) + L-glutamate + ADP + phosphate + H(+). The enzyme catalyses L-aspartyl-tRNA(Asn) + L-glutamine + ATP + H2O = L-asparaginyl-tRNA(Asn) + L-glutamate + ADP + phosphate + 2 H(+). In terms of biological role, allows the formation of correctly charged Asn-tRNA(Asn) or Gln-tRNA(Gln) through the transamidation of misacylated Asp-tRNA(Asn) or Glu-tRNA(Gln) in organisms which lack either or both of asparaginyl-tRNA or glutaminyl-tRNA synthetases. The reaction takes place in the presence of glutamine and ATP through an activated phospho-Asp-tRNA(Asn) or phospho-Glu-tRNA(Gln). In Listeria innocua serovar 6a (strain ATCC BAA-680 / CLIP 11262), this protein is Aspartyl/glutamyl-tRNA(Asn/Gln) amidotransferase subunit B.